A 415-amino-acid polypeptide reads, in one-letter code: Krueppel-like factor 15 (415 aa).

The 9aaTAD signature appears at 75–83; the sequence is SILDFLLSR. Positions 172 to 216 are disordered; that stretch reads LSAGSHRSHLHPESAGRERCTPPPGGTSGGGAQSAGEGPAHDGPV. The segment covering 181-191 has biased composition (basic and acidic residues); that stretch reads LHPESAGRERC. 3 C2H2-type zinc fingers span residues 320–344, 350–374, and 380–402; these read HKCT…LRRH, FACT…RRSH, and YQCP…IKVH.

It belongs to the Sp1 C2H2-type zinc-finger protein family. In terms of assembly, interacts with MYOCD. Interacts with EP300. Expressed in aortic smooth muscle cells.

The protein localises to the nucleus. Functionally, transcriptional regulator that binds to the GA element of the CLCNKA promoter. Binds to the KCNIP2 promoter and regulates KCNIP2 circadian expression in the heart. Is a repressor of CCN2 expression, involved in the control of cardiac fibrosis. Is also involved in the control of cardiac hypertrophy acting through the inhibition of MEF2A, GATA4 and MYOCD activity. Is a negative regulator of TP53 acetylation. Inhibits NF-kappa-B activation through repression of EP300-dependent RELA acetylation. Involved in podocyte differentiation. This is Krueppel-like factor 15 (Klf15) from Mus musculus (Mouse).